Here is a 539-residue protein sequence, read N- to C-terminus: Probable protein kinase UbiB (539 aa).

A helical transmembrane segment spans residues 23–43; that stretch reads DLLFALPLPWWMLAVRFVLPW. Residues 125–492 form the Protein kinase domain; the sequence is RFDETPLASA…WHDRKDEPVL (368 aa). Residues 131–139 and Lys-153 each bind ATP; that span reads LASASVAQV. Residue Asp-288 is the Proton acceptor of the active site. Transmembrane regions (helical) follow at residues 494-514 and 517-537; these read LIGAALLVGGAIQGWVMSEAA and LLTLTAWPAAIMLIAGLYLIV.

It belongs to the ABC1 family. UbiB subfamily.

The protein resides in the cell inner membrane. It functions in the pathway cofactor biosynthesis; ubiquinone biosynthesis [regulation]. Is probably a protein kinase regulator of UbiI activity which is involved in aerobic coenzyme Q (ubiquinone) biosynthesis. The chain is Probable protein kinase UbiB from Pseudomonas syringae pv. tomato (strain ATCC BAA-871 / DC3000).